A 338-amino-acid chain; its full sequence is Fructose-1,6-bisphosphatase class 1 1 (338 aa).

Glu91, Asp113, Leu115, and Asp116 together coordinate Mg(2+). Substrate-binding positions include 116-119 (DGSS), Asn208, and Lys274. Residue Glu280 coordinates Mg(2+).

This sequence belongs to the FBPase class 1 family. As to quaternary structure, homotetramer. Mg(2+) is required as a cofactor.

It is found in the cytoplasm. The catalysed reaction is beta-D-fructose 1,6-bisphosphate + H2O = beta-D-fructose 6-phosphate + phosphate. It functions in the pathway carbohydrate biosynthesis; gluconeogenesis. This is Fructose-1,6-bisphosphatase class 1 1 from Cupriavidus necator (strain ATCC 17699 / DSM 428 / KCTC 22496 / NCIMB 10442 / H16 / Stanier 337) (Ralstonia eutropha).